Reading from the N-terminus, the 100-residue chain is uncharacterized protein (100 aa).

It belongs to the ycf15 family.

It localises to the plastid. The protein localises to the chloroplast. This is an uncharacterized protein from Panax ginseng (Korean ginseng).